Consider the following 702-residue polypeptide: Polyribonucleotide nucleotidyltransferase (702 aa).

Mg(2+) contacts are provided by Asp-485 and Asp-491. The KH domain occupies Pro-552–Ile-611. One can recognise an S1 motif domain in the interval Gly-621–Lys-689.

It belongs to the polyribonucleotide nucleotidyltransferase family. Requires Mg(2+) as cofactor.

It localises to the cytoplasm. It catalyses the reaction RNA(n+1) + phosphate = RNA(n) + a ribonucleoside 5'-diphosphate. Its function is as follows. Involved in mRNA degradation. Catalyzes the phosphorolysis of single-stranded polyribonucleotides processively in the 3'- to 5'-direction. This chain is Polyribonucleotide nucleotidyltransferase, found in Clostridium perfringens (strain 13 / Type A).